Consider the following 125-residue polypeptide: Hydrogenase maturation factor HypA (125 aa).

His2 lines the Ni(2+) pocket. Zn(2+) contacts are provided by Cys73, Cys76, Cys96, and Cys99.

It belongs to the HypA/HybF family.

Its function is as follows. Involved in the maturation of [NiFe] hydrogenases. Required for nickel insertion into the metal center of the hydrogenase. This is Hydrogenase maturation factor HypA from Methanobrevibacter smithii (strain ATCC 35061 / DSM 861 / OCM 144 / PS).